A 506-amino-acid polypeptide reads, in one-letter code: MAP kinase kinase MKK2/SSP33 (506 aa).

Residues 1–69 (MASMFRPPES…TSTTSSMASN (69 aa)) are disordered. Residues 26–52 (LVQNAKSTNDGQHLNRSPYSSVNESPY) are compositionally biased toward polar residues. Over residues 53 to 69 (SNNSTSATSTTSSMASN) the composition is skewed to low complexity. Residues 214–481 (ITTLGILGEG…PRQMLKHPWI (268 aa)) enclose the Protein kinase domain. ATP contacts are provided by residues 220–228 (LGEGAGGSV) and Lys-243. The active-site Proton acceptor is the Asp-342.

It belongs to the protein kinase superfamily. STE Ser/Thr protein kinase family. MAP kinase kinase subfamily.

It catalyses the reaction L-seryl-[protein] + ATP = O-phospho-L-seryl-[protein] + ADP + H(+). The enzyme catalyses L-threonyl-[protein] + ATP = O-phospho-L-threonyl-[protein] + ADP + H(+). It carries out the reaction L-tyrosyl-[protein] + ATP = O-phospho-L-tyrosyl-[protein] + ADP + H(+). Its function is as follows. Serine/threonine protein kinase involved in a signal transduction pathway that plays a role in yeast cell morphogenesis and cell growth. This pathway seems to start by SMP3; then involves the kinase PKC1 that may act on the BCK1 kinase that then phosphorylates MKK1 and MKK2 which themselves phosphorylate the MPK1 kinase. In Saccharomyces cerevisiae (strain ATCC 204508 / S288c) (Baker's yeast), this protein is MAP kinase kinase MKK2/SSP33 (MKK2).